The primary structure comprises 910 residues: MKVGVLWLISFFTFTDGHGGFLGKNDGIKTKKELIVNKKKHLGPVEEYQLLLQVTYRDSKEKRDLRNFLKLLKPPLLWSHGLIRIIRAKATTDCNSLNGVLQCTCEDSYTWFPPSCLDPQNCYLHTAGALPSCECHLNNLSQSVNFCERTKIWGTFKINERFTNDLLNSSSAIYSKYANGIEIQLKKAYERIQGFESVQVTQFRNGSIVAGYEVVGSSSASELLSAIEHVAEKAKTALHKLFPLEDGSFRVFGKAQCNDIVFGFGSKDDEYTLPCSSGYRGNITAKCESSGWQVIRETCVLSLLEELNKNFSMIVGNATEAAVSSFVQNLSVIIRQNPSTTVGNLASVVSILSNISSLSLASHFRVSNSTMEDVISIADNILNSASVTNWTVLLREEKYASSRLLETLENISTLVPPTALPLNFSRKFIDWKGIPVNKSQLKRGYSYQIKMCPQNTSIPIRGRVLIGSDQFQRSLPETIISMASLTLGNILPVSKNGNAQVNGPVISTVIQNYSINEVFLFFSKIESNLSQPHCVFWDFSHLQWNDAGCHLVNETQDIVTCQCTHLTSFSILMSPFVPSTIFPVVKWITYVGLGISIGSLILCLIIEALFWKQIKKSQTSHTRRICMVNIALSLLIADVWFIVGATVDTTVNPSGVCTAAVFFTHFFYLSLFFWMLMLGILLAYRIILVFHHMAQHLMMAVGFCLGYGCPLIISVITIAVTQPSNTYKRKDVCWLNWSNGSKPLLAFVVPALAIVAVNFVVVLLVLTKLWRPTVGERLSRDDKATIIRVGKSLLILTPLLGLTWGFGIGTIVDSQNLAWHVIFALLNAFQGFFILCFGILLDSKLRQLLFNKLSALSSWKQTEKQNSSDLSAKPKFSKPFNPLQNKGHYAFSHTGDSSDNIMLTQFVSNE.

The signal sequence occupies residues 1–19 (MKVGVLWLISFFTFTDGHG). Residues 20–583 (GFLGKNDGIK…SPFVPSTIFP (564 aa)) are Extracellular-facing. Residues N139, N168, N205, N282, N310, N317, N329, N354, N368, N389, N410, N423, N437, N455, N512, N528, and N553 are each glycosylated (N-linked (GlcNAc...) asparagine). Residues 148 to 256 (ERTKIWGTFK…GSFRVFGKAQ (109 aa)) form the SEA domain. 2 cysteine pairs are disulfide-bonded: C257–C287 and C275–C299. Positions 437 to 579 (NKSQLKRGYS…SILMSPFVPS (143 aa)) constitute a GAIN-B domain. Cystine bridges form between C534–C561 and C549–C563. The segment at 534–579 (CVFWDFSHLQWNDAGCHLVNETQDIVTCQCTHLTSFSILMSPFVPS) is GPS. The segment at 568-576 (SFSILMSPF) is stachel. A helical membrane pass occupies residues 584-609 (VVKWITYVGLGISIGSLILCLIIEAL). Residues 610 to 621 (FWKQIKKSQTSH) are Cytoplasmic-facing. Residues 622 to 646 (TRRICMVNIALSLLIADVWFIVGAT) form a helical membrane-spanning segment. The Extracellular segment spans residues 647-658 (VDTTVNPSGVCT). A disulfide bond links C657 and C733. Residues 659-684 (AAVFFTHFFYLSLFFWMLMLGILLAY) form a helical membrane-spanning segment. Topologically, residues 685-696 (RIILVFHHMAQH) are cytoplasmic. The helical transmembrane segment at 697–719 (LMMAVGFCLGYGCPLIISVITIA) threads the bilayer. Over 720–742 (VTQPSNTYKRKDVCWLNWSNGSK) the chain is Extracellular. N-linked (GlcNAc...) asparagine glycans are attached at residues N736 and N739. A helical transmembrane segment spans residues 743 to 767 (PLLAFVVPALAIVAVNFVVVLLVLT). The Cytoplasmic portion of the chain corresponds to 768 to 784 (KLWRPTVGERLSRDDKA). The chain crosses the membrane as a helical span at residues 785-813 (TIIRVGKSLLILTPLLGLTWGFGIGTIVD). Over 814–816 (SQN) the chain is Extracellular. The helical transmembrane segment at 817–842 (LAWHVIFALLNAFQGFFILCFGILLD) threads the bilayer. Residues 843-910 (SKLRQLLFNK…IMLTQFVSNE (68 aa)) are Cytoplasmic-facing.

It belongs to the G-protein coupled receptor 2 family. Adhesion G-protein coupled receptor (ADGR) subfamily. As to quaternary structure, heterodimer of 2 chains generated by proteolytic processing; the large extracellular N-terminal fragment and the membrane-bound C-terminal fragment predominantly remain associated and non-covalently linked. Autoproteolytically processed at the GPS region of the GAIN-B domain; this cleavage modulates receptor activity. In terms of processing, glycosylated. Glycosylation at Asn-389 is required for secretion or folding. In terms of tissue distribution, mainly expressed in the kidney. Up-regulated in lung adenocarcinomas and prostate cancers.

It localises to the cell membrane. The protein resides in the secreted. Its activity is regulated as follows. Forms a heterodimer of 2 chains generated by proteolytic processing that remain associated through non-covalent interactions mediated by the GAIN-B domain. In the inactivated receptor, the Stachel sequence (also named stalk) is embedded in the GAIN-B domain, where it adopts a beta-strand conformation. On activation, the Stachel moves into the 7 transmembrane region and adopts a twisted hook-shaped configuration that forms contacts within the receptor, leading to coupling of a G-alpha protein, which activates signaling. The cleaved GAIN-B and N-terminal domains can then dissociate from the rest of the receptor. Functionally, adhesion G-protein coupled receptor (aGPCR) for N-docosahexaenoylethanolamine (synaptamide), an omega-3 fatty acid lipid highly enriched in the brain. Ligand binding causes a conformation change that triggers signaling via guanine nucleotide-binding proteins (G proteins) and modulates the activity of downstream effectors, such as adenylate cyclase. ADGRF1 is coupled to G(s) G proteins and mediates activation of adenylate cyclase activity. Also able to couple to G(q), G(i) and G(12)/G(13) G proteins; additional evidence is however required to confirm this result in vivo. Involved in the development of neurons and cognitive function. In liver, involved in fat accumulation. This chain is Adhesion G-protein coupled receptor F1, found in Homo sapiens (Human).